The following is a 281-amino-acid chain: tRNA pseudouridine synthase A (281 aa).

The Nucleophile role is filled by Asp55. A substrate-binding site is contributed by Tyr110.

It belongs to the tRNA pseudouridine synthase TruA family.

It carries out the reaction uridine(38/39/40) in tRNA = pseudouridine(38/39/40) in tRNA. Its function is as follows. Formation of pseudouridine at positions 38, 39 and 40 in the anticodon stem and loop of transfer RNAs. This chain is tRNA pseudouridine synthase A, found in Methanocorpusculum labreanum (strain ATCC 43576 / DSM 4855 / Z).